A 321-amino-acid chain; its full sequence is Citrate synthase (321 aa).

Residues His-248 and Asp-306 contribute to the active site.

Belongs to the citrate synthase family.

It catalyses the reaction oxaloacetate + acetyl-CoA + H2O = citrate + CoA + H(+). Its pathway is carbohydrate metabolism; tricarboxylic acid cycle; isocitrate from oxaloacetate: step 1/2. The chain is Citrate synthase (gltA) from Bartonella bacilliformis.